We begin with the raw amino-acid sequence, 420 residues long: Dihydrolipoyllysine-residue succinyltransferase component of 2-oxoglutarate dehydrogenase complex (420 aa).

One can recognise a Lipoyl-binding domain in the interval 1 to 76 (MAEVKVPELA…EVGQAVAVVG (76 aa)). An N6-lipoyllysine modification is found at Lys42. The tract at residues 75–199 (VGEGQVNTSN…IREKMSRRKK (125 aa)) is disordered. Over residues 81–90 (NTSNDSSNES) the composition is skewed to polar residues. A compositionally biased stretch (basic and acidic residues) spans 91-102 (SQKDEAKEKETP). Polar residues predominate over residues 103–127 (KQSNPNSSESENTQDNSQQRINATP). The region spanning 124-160 (NATPSARRHARKNGVDLSEVSGKGNDVLRKDDVENSQ) is the Peripheral subunit-binding (PSBD) domain. Residues 149-158 (DVLRKDDVEN) show a composition bias toward basic and acidic residues. The span at 159-174 (SQKSSSQTAKSESKSQ) shows a compositional bias: low complexity. Over residues 175-186 (NSGSKQTNNNPS) the composition is skewed to polar residues. Active-site residues include His391 and Asp395.

The protein belongs to the 2-oxoacid dehydrogenase family. Forms a 24-polypeptide structural core with octahedral symmetry. Part of the 2-oxoglutarate dehydrogenase (OGDH) complex composed of E1 (2-oxoglutarate dehydrogenase), E2 (dihydrolipoamide succinyltransferase) and E3 (dihydrolipoamide dehydrogenase); the complex contains multiple copies of the three enzymatic components (E1, E2 and E3). It depends on (R)-lipoate as a cofactor.

It catalyses the reaction N(6)-[(R)-dihydrolipoyl]-L-lysyl-[protein] + succinyl-CoA = N(6)-[(R)-S(8)-succinyldihydrolipoyl]-L-lysyl-[protein] + CoA. The protein operates within amino-acid degradation; L-lysine degradation via saccharopine pathway; glutaryl-CoA from L-lysine: step 6/6. In terms of biological role, E2 component of the 2-oxoglutarate dehydrogenase (OGDH) complex which catalyzes the second step in the conversion of 2-oxoglutarate to succinyl-CoA and CO(2). The polypeptide is Dihydrolipoyllysine-residue succinyltransferase component of 2-oxoglutarate dehydrogenase complex (odhB) (Staphylococcus epidermidis (strain ATCC 35984 / DSM 28319 / BCRC 17069 / CCUG 31568 / BM 3577 / RP62A)).